The following is a 306-amino-acid chain: Anamorsin homolog (306 aa).

The span at 1–25 (MVPPREDVTVRIVCERRRTAGKEAR) shows a compositional bias: basic and acidic residues. The interval 1-51 (MVPPREDVTVRIVCERRRTAGKEARPPPSAKPTPGNTSSHPNAKETHRSNE) is disordered. The interval 59-190 (KQSHRRSIMA…RRNNTTNSVA (132 aa)) is N-terminal SAM-like domain. The interval 191 to 218 (TLNFASNNNNGNDLLIDEDNLLTDASNL) is linker. [2Fe-2S] cluster-binding residues include cysteine 236, cysteine 242, cysteine 245, and cysteine 247. Positions 236–247 (CSGRAPCDDCTC) are fe-S binding site A. Positions 252–265 (GAKEGNSEQPKEIK) are enriched in basic and acidic residues. The disordered stretch occupies residues 252–272 (GAKEGNSEQPKEIKSSSCGKC). [4Fe-4S] cluster-binding residues include cysteine 269, cysteine 272, cysteine 280, and cysteine 283. 2 short sequence motifs (cx2C motif) span residues 269 to 272 (CGKC) and 280 to 283 (CASC). The segment at 269–283 (CGKCSLGDAFRCASC) is fe-S binding site B.

It belongs to the anamorsin family. In terms of assembly, monomer. [2Fe-2S] cluster serves as cofactor. It depends on [4Fe-4S] cluster as a cofactor.

It is found in the cytoplasm. The protein resides in the mitochondrion intermembrane space. Functionally, component of the cytosolic iron-sulfur (Fe-S) protein assembly (CIA) machinery. Required for the maturation of extramitochondrial Fe-S proteins. Part of an electron transfer chain functioning in an early step of cytosolic Fe-S biogenesis, facilitating the de novo assembly of a [4Fe-4S] cluster on the cytosolic Fe-S scaffold complex. Electrons are transferred from NADPH via a FAD- and FMN-containing diflavin oxidoreductase. Together with the diflavin oxidoreductase, also required for the assembly of the diferric tyrosyl radical cofactor of ribonucleotide reductase (RNR), probably by providing electrons for reduction during radical cofactor maturation in the catalytic small subunit. The protein is Anamorsin homolog of Phaeodactylum tricornutum (strain CCAP 1055/1).